Reading from the N-terminus, the 193-residue chain is Annexin-2 receptor (193 aa).

The segment covering Gln78–Lys87 has biased composition (polar residues). The interval Gln78 to Glu111 is disordered.

Widely expressed. Highly expressed in lymphocytes. Expressed in both resting CD4(+) and CD8(+) T-cells.

Its function is as follows. May act as a receptor for annexin II on marrow stromal cells to induce osteoclast formation. The protein is Annexin-2 receptor (ANXA2R) of Homo sapiens (Human).